Consider the following 93-residue polypeptide: Putative regulatory protein LBL_1834 (93 aa).

It belongs to the RemA family.

This chain is Putative regulatory protein LBL_1834, found in Leptospira borgpetersenii serovar Hardjo-bovis (strain L550).